Consider the following 95-residue polypeptide: UPF0213 protein PEPE_0875 (95 aa).

In terms of domain architecture, GIY-YIG spans 7–82 (NGFYFYVLRC…KQRTRSSKIK (76 aa)).

It belongs to the UPF0213 family.

The sequence is that of UPF0213 protein PEPE_0875 from Pediococcus pentosaceus (strain ATCC 25745 / CCUG 21536 / LMG 10740 / 183-1w).